The following is an 84-amino-acid chain: Large ribosomal subunit protein eL34 (84 aa).

It belongs to the eukaryotic ribosomal protein eL34 family.

This Pyrobaculum calidifontis (strain DSM 21063 / JCM 11548 / VA1) protein is Large ribosomal subunit protein eL34.